Here is a 265-residue protein sequence, read N- to C-terminus: Orotidine 5'-phosphate decarboxylase (265 aa).

Substrate is bound by residues D38, 60 to 62 (KTH), 92 to 101 (DRKFADIGKT), Y218, and R236. K94 acts as the Proton donor in catalysis.

This sequence belongs to the OMP decarboxylase family.

It carries out the reaction orotidine 5'-phosphate + H(+) = UMP + CO2. The protein operates within pyrimidine metabolism; UMP biosynthesis via de novo pathway; UMP from orotate: step 2/2. The chain is Orotidine 5'-phosphate decarboxylase (URA3) from Cyberlindnera fabianii (Yeast).